The following is a 328-amino-acid chain: GTP 3',8-cyclase (328 aa).

Residues methionine 1 to alanine 229 form the Radical SAM core domain. Arginine 8 contacts GTP. 2 residues coordinate [4Fe-4S] cluster: cysteine 15 and cysteine 19. Position 21 (tyrosine 21) interacts with S-adenosyl-L-methionine. [4Fe-4S] cluster is bound at residue cysteine 22. Arginine 60 contributes to the GTP binding site. Glycine 64 provides a ligand contact to S-adenosyl-L-methionine. Position 91 (threonine 91) interacts with GTP. Serine 115 serves as a coordination point for S-adenosyl-L-methionine. Position 155 (lysine 155) interacts with GTP. Residue methionine 189 participates in S-adenosyl-L-methionine binding. [4Fe-4S] cluster is bound by residues cysteine 252 and cysteine 255. Arginine 257–arginine 259 lines the GTP pocket. A [4Fe-4S] cluster-binding site is contributed by cysteine 269.

Belongs to the radical SAM superfamily. MoaA family. As to quaternary structure, monomer and homodimer. The cofactor is [4Fe-4S] cluster.

The catalysed reaction is GTP + AH2 + S-adenosyl-L-methionine = (8S)-3',8-cyclo-7,8-dihydroguanosine 5'-triphosphate + 5'-deoxyadenosine + L-methionine + A + H(+). Its pathway is cofactor biosynthesis; molybdopterin biosynthesis. Its function is as follows. Catalyzes the cyclization of GTP to (8S)-3',8-cyclo-7,8-dihydroguanosine 5'-triphosphate. The chain is GTP 3',8-cyclase from Nostoc sp. (strain PCC 7120 / SAG 25.82 / UTEX 2576).